The chain runs to 296 residues: Glutamate 5-kinase (296 aa).

K15 is a binding site for ATP. Positions 55, 159, and 186 each coordinate substrate. ATP-binding positions include 206 to 207 (SD) and 248 to 254 (TGGIATK).

The protein belongs to the glutamate 5-kinase family.

The protein localises to the cytoplasm. It catalyses the reaction L-glutamate + ATP = L-glutamyl 5-phosphate + ADP. It participates in amino-acid biosynthesis; L-proline biosynthesis; L-glutamate 5-semialdehyde from L-glutamate: step 1/2. In terms of biological role, catalyzes the transfer of a phosphate group to glutamate to form L-glutamate 5-phosphate. The polypeptide is Glutamate 5-kinase (Treponema pallidum (strain Nichols)).